A 113-amino-acid chain; its full sequence is Hydrogenase maturation factor HypA (113 aa).

Position 2 (H2) interacts with Ni(2+). C73, C76, C89, and C92 together coordinate Zn(2+).

This sequence belongs to the HypA/HybF family.

In terms of biological role, involved in the maturation of [NiFe] hydrogenases. Required for nickel insertion into the metal center of the hydrogenase. The sequence is that of Hydrogenase maturation factor HypA from Xanthobacter autotrophicus (strain ATCC BAA-1158 / Py2).